A 550-amino-acid chain; its full sequence is MGLKVNVSAIFMAVLLTLQTPTGQIHWGNLSKIGVVGIGSASYKVMTRSSHQSLVIKLMPNITLLNNCTRVEIAEYRRLLRTVLEPIRDALNAMTQNIRPVQSVASSRRHKRFAGVVLAGAALGVATAAQITAGIALHQSMLNSQAIDNLRASLETTNQAIEAIRQAGQEMILAVQGVQDYINNELIPSMNQLSCDLIGQKLGLKLLRYYTEILSLFGPSLRDPISAEISIQALSYALGGDINKVLEKLGYSGGDLLGILESRGIKARITHVDTESYLIVLSIAYPTLSEIKGVIVHRLEGVSYNIGSQEWYTTVPKYVATQGYLISNFDESSCTFMPEGTVCSQNALYPMSPLLQECLRGSTKSCARTLVSGSFGNRFILSQGNLIANCASILCKCYTTGTIINQDPDKILTYIAADHCPVVEVNGVTIQVGSRRYPDAVYLHRIDLGPPILLERLDVGTNLGNAIAKLEDAKELLESSDQILRSMKGLSSTCIVYILIAVCLGGLIGIPALICCCRGRCNKKGEQVGMSRPGLKPDLTGTSKSYVRSL.

Positions 1-23 (MGLKVNVSAIFMAVLLTLQTPTG) are cleaved as a signal peptide. Over 24–487 (QIHWGNLSKI…ESSDQILRSM (464 aa)) the chain is Extracellular. N-linked (GlcNAc...) asparagine; by host glycosylation is found at asparagine 29, asparagine 61, and asparagine 67. The interval 69–95 (TRVEIAEYRRLLRTVLEPIRDALNAMT) is HRC. Residues 113 to 138 (FAGVVLAGAALGVATAAQITAGIALH) are fusion peptide. A coiled-coil region spans residues 138–166 (HQSMLNSQAIDNLRASLETTNQAIEAIRQ). The HRA stretch occupies residues 139-215 (QSMLNSQAID…LLRYYTEILS (77 aa)). 4 disulfide bridges follow: cysteine 334–cysteine 343, cysteine 358–cysteine 366, cysteine 390–cysteine 395, and cysteine 397–cysteine 420. Residues 367–444 (ARTLVSGSFG…RRYPDAVYLH (78 aa)) form an interaction with hemagglutinin region. The interval 445–494 (RIDLGPPILLERLDVGTNLGNAIAKLEDAKELLESSDQILRSMKGLSSTC) is HRB. Residues 462-487 (NLGNAIAKLEDAKELLESSDQILRSM) adopt a coiled-coil conformation. Residues 488 to 518 (KGLSSTCIVYILIAVCLGGLIGIPALICCCR) traverse the membrane as a helical segment. Over 519-550 (GRCNKKGEQVGMSRPGLKPDLTGTSKSYVRSL) the chain is Cytoplasmic.

It belongs to the paramyxoviruses fusion glycoprotein family. Homotrimer of disulfide-linked F1-F2. The inactive precursor F0 is glycosylated and proteolytically cleaved into F1 and F2 to be functionally active. The cleavage is mediated by host furin during the transport and maturation of the polypeptide.

It localises to the virion membrane. The protein resides in the host cell membrane. Functionally, class I viral fusion protein. Under the current model, the protein has at least 3 conformational states: pre-fusion native state, pre-hairpin intermediate state, and post-fusion hairpin state. During viral and plasma cell membrane fusion, the heptad repeat (HR) regions assume a trimer-of-hairpins structure, positioning the fusion peptide in close proximity to the C-terminal region of the ectodomain. The formation of this structure appears to drive apposition and subsequent fusion of viral and plasma cell membranes. Directs fusion of viral and cellular membranes leading to delivery of the nucleocapsid into the cytoplasm. This fusion is pH independent and occurs directly at the outer cell membrane. During viral entry or virus-mediated fusion between infected cells and neighboring susceptible cells, the head domain of the H protein initially binds to its receptor and then the stalk region of the H protein transmits the fusion-triggering signal to the F protein. Upon HN binding to its cellular receptor, the hydrophobic fusion peptide is unmasked and interacts with the cellular membrane, inducing the fusion between cell and virion membranes. Later in infection, F proteins expressed at the plasma membrane of infected cells could mediate fusion with adjacent cells to form syncytia, a cytopathic effect that could lead to tissue necrosis. In terms of biological role, some hyperfusogenic isolates can induce membrane fusion in SLAM- and nectin-4-negative cells and are linked to fatal subacute sclerosing panencephalitis (SSPE) or measles inclusion body encephalitis (MIBE). The neuropathogenicity is closely associated with enhanced propagation mediated by cell-to-cell fusion in the brain, which is principally regulated by hyperfusogenic mutations of the viral F protein. Cell-to-cell transmission of the virus also occurs with hyperfusogenic isolates. In Homo sapiens (Human), this protein is Fusion glycoprotein F0 (F).